The chain runs to 312 residues: GTP cyclohydrolase MptA (312 aa).

It belongs to the GTP cyclohydrolase IV family. Homodimer. It depends on Fe(2+) as a cofactor.

It catalyses the reaction GTP + H2O = 7,8-dihydroneopterin 2',3'-cyclic phosphate + formate + diphosphate + H(+). The protein operates within cofactor biosynthesis; 5,6,7,8-tetrahydromethanopterin biosynthesis. Converts GTP to 7,8-dihydro-D-neopterin 2',3'-cyclic phosphate, the first intermediate in the biosynthesis of coenzyme methanopterin. The sequence is that of GTP cyclohydrolase MptA from Methanococcus vannielii (strain ATCC 35089 / DSM 1224 / JCM 13029 / OCM 148 / SB).